Consider the following 116-residue polypeptide: Large ribosomal subunit protein uL18 (116 aa).

It belongs to the universal ribosomal protein uL18 family. As to quaternary structure, part of the 50S ribosomal subunit; part of the 5S rRNA/L5/L18/L25 subcomplex. Contacts the 5S and 23S rRNAs.

This is one of the proteins that bind and probably mediate the attachment of the 5S RNA into the large ribosomal subunit, where it forms part of the central protuberance. This is Large ribosomal subunit protein uL18 from Psychrobacter arcticus (strain DSM 17307 / VKM B-2377 / 273-4).